The primary structure comprises 464 residues: Phosphoenolpyruvate carboxylase (464 aa).

The protein belongs to the PEPCase type 2 family. Homotetramer. It depends on Mg(2+) as a cofactor.

It catalyses the reaction oxaloacetate + phosphate = phosphoenolpyruvate + hydrogencarbonate. In terms of biological role, catalyzes the irreversible beta-carboxylation of phosphoenolpyruvate (PEP) to form oxaloacetate (OAA), a four-carbon dicarboxylic acid source for the tricarboxylic acid cycle. This is Phosphoenolpyruvate carboxylase from Thermofilum pendens (strain DSM 2475 / Hrk 5).